A 223-amino-acid chain; its full sequence is ATP-dependent dethiobiotin synthetase BioD (223 aa).

A Mg(2+)-binding site is contributed by T16. The active site involves K37. Residue S41 coordinates substrate. Residues D50 and E111 each contribute to the Mg(2+) site. Residues D50, 111–114, and 171–172 each bind ATP; these read EGAG and NR.

It belongs to the dethiobiotin synthetase family. In terms of assembly, homodimer. It depends on Mg(2+) as a cofactor.

Its subcellular location is the cytoplasm. It catalyses the reaction (7R,8S)-7,8-diammoniononanoate + CO2 + ATP = (4R,5S)-dethiobiotin + ADP + phosphate + 3 H(+). Its pathway is cofactor biosynthesis; biotin biosynthesis; biotin from 7,8-diaminononanoate: step 1/2. Its function is as follows. Catalyzes a mechanistically unusual reaction, the ATP-dependent insertion of CO2 between the N7 and N8 nitrogen atoms of 7,8-diaminopelargonic acid (DAPA, also called 7,8-diammoniononanoate) to form a ureido ring. This chain is ATP-dependent dethiobiotin synthetase BioD, found in Anaeromyxobacter sp. (strain K).